Reading from the N-terminus, the 167-residue chain is uncharacterized protein (167 aa).

This is an uncharacterized protein from Pasteurella multocida (strain Pm70).